The following is an 865-amino-acid chain: Xylosyltransferase 2 (865 aa).

At 1-15 the chain is on the cytoplasmic side; it reads MVASARVQKLVRRYK. Residues 16–36 traverse the membrane as a helical; Signal-anchor for type II membrane protein segment; the sequence is LAIATALAILLLQGLVVWSFS. Residues 37–865 are Lumenal-facing; it reads GLEEDEAGEK…GPVKADGRLR (829 aa). The segment at 41–157 is disordered; sequence DEAGEKGRQR…EGAPQPTDNG (117 aa). Basic and acidic residues predominate over residues 53–65; sequence RPLDPGEGSKDTD. Positions 73–82 are enriched in basic residues; that stretch reads STGRRHGRWR. N-linked (GlcNAc...) asparagine glycosylation occurs at Asn-122. The span at 125–137 shows a compositional bias: low complexity; the sequence is GAAAGEALVGAAG. Cystine bridges form between Cys-162–Cys-190, Cys-206–Cys-448, Cys-467–Cys-480, and Cys-469–Cys-478. UDP-alpha-D-xylose is bound by residues Val-239, Asp-267, and 296-298; that span reads TIW. N-linked (GlcNAc...) asparagine glycosylation is present at Asn-327. Position 400–401 (400–401) interacts with UDP-alpha-D-xylose; that stretch reads DW. UDP-alpha-D-xylose contacts are provided by residues Ser-481 and 504 to 505; that span reads RK. Cystine bridges form between Cys-581/Cys-833 and Cys-826/Cys-839. Asn-683 carries N-linked (GlcNAc...) asparagine glycosylation. The interval 846–865 is disordered; sequence SLSPDPKSELGPVKADGRLR.

The protein belongs to the glycosyltransferase 14 family. XylT subfamily. As to quaternary structure, monomer. Mg(2+) serves as cofactor. It depends on Mn(2+) as a cofactor. In terms of processing, contains disulfide bonds.

Its subcellular location is the golgi apparatus membrane. The protein localises to the secreted. The catalysed reaction is UDP-alpha-D-xylose + L-seryl-[protein] = 3-O-(beta-D-xylosyl)-L-seryl-[protein] + UDP + H(+). Its pathway is glycan metabolism; chondroitin sulfate biosynthesis. The protein operates within glycan metabolism; heparan sulfate biosynthesis. Functionally, catalyzes the first step in the biosynthesis of chondroitin sulfate, heparan sulfate and dermatan sulfate proteoglycans, such as DCN. Transfers D-xylose from UDP-D-xylose to specific serine residues of the core protein. The sequence is that of Xylosyltransferase 2 (XYLT2) from Pan troglodytes (Chimpanzee).